The following is a 415-amino-acid chain: Fructose-like permease IIC component (415 aa).

The Cytoplasmic segment spans residues 1–46 (MAIKKRSATVVPGASGAAAAVKNPQASKSSFWGELPQHVMSGISRM). The 376-residue stretch at 35–410 (LPQHVMSGIS…RLMMFRKGKL (376 aa)) folds into the PTS EIIC type-2 domain. The helical transmembrane segment at 47-67 (VPTLIMGGVILAFSQLIAYSW) threads the bilayer. Topologically, residues 68–101 (LKIPAEIGIMDALNSGKFSGFDLSLLKFAWLSQS) are periplasmic. Residues 102–122 (FGGVLFGFAIPMFAAFVANSI) traverse the membrane as a helical segment. Residues 123–126 (GGKL) lie on the Cytoplasmic side of the membrane. Residues 127 to 147 (AFPAGFIGGLMSTQPTQLLNF) form a helical membrane-spanning segment. Over 148–157 (DPSTMQWATS) the chain is Periplasmic. Residues 158 to 178 (SPVPSTFIGALIISIVAGYLV) traverse the membrane as a helical segment. The Cytoplasmic portion of the chain corresponds to 179–197 (KWMNQKIQLPDFLLAFKTT). Residues 198–218 (FLLPILSAIFVMLAMYYVITP) form a helical membrane-spanning segment. At 219–237 (FGGWINGGIRTVLTAAGEK) the chain is on the periplasmic side. A helical transmembrane segment spans residues 238–258 (GALMYAMGIAAATAIDLGGPI). The Cytoplasmic segment spans residues 259-276 (NKAAGFVAFSFTTDHVLP). A helical transmembrane segment spans residues 277–297 (VTARSIAIVIPPIGLGLATII). Residues 298–318 (DRRLTGKRLFNAQLYPQGKTA) lie on the Periplasmic side of the membrane. A helical transmembrane segment spans residues 319 to 339 (MFLAFMGISEGAIPFALESPI). Residues 340 to 341 (TA) are Cytoplasmic-facing. The chain crosses the membrane as a helical span at residues 342-362 (IPSYMVGAIVGSTAAVWLGAV). Residues 363-378 (QWFPESAIWAWPLVTN) lie on the Periplasmic side of the membrane. The helical transmembrane segment at 379–399 (LGVYMAGIALGAVITALMVVF) threads the bilayer. The Cytoplasmic portion of the chain corresponds to 400 to 415 (LRLMMFRKGKLLIDSL).

It is found in the cell inner membrane. In terms of biological role, the phosphoenolpyruvate-dependent sugar phosphotransferase system (PTS), a major carbohydrate active -transport system, catalyzes the phosphorylation of incoming sugar substrates concomitant with their translocation across the cell membrane. The sequence is that of Fructose-like permease IIC component (fryC) from Escherichia coli O157:H7.